The following is a 352-amino-acid chain: Dof zinc finger protein DOF1.8 (352 aa).

The interval 24–46 (LKQQSNPPSPATPVERKARPEKD) is disordered. The segment covering 37 to 46 (VERKARPEKD) has biased composition (basic and acidic residues). The Dof-type zinc-finger motif lies at 49 to 103 (LNCPRCNSLNTKFCYYNNYSLTQPRYFCKDCRRYWTAGGSLRNIPVGGGVRKNKR). Zn(2+) is bound by residues cysteine 51, cysteine 54, cysteine 76, and cysteine 79. Disordered regions lie at residues 93 to 136 (PVGG…PLPH) and 265 to 334 (GGDP…VGFW). The span at 104–129 (SSSNSSSSSPSSSSSSKKPLFANNNT) shows a compositional bias: low complexity. Residues 310–323 (ENNDEHSDHEHEKE) show a composition bias toward basic and acidic residues.

Its subcellular location is the nucleus. Transcription factor that binds specifically to a 5'-AA[AG]G-3' consensus core sequence. The polypeptide is Dof zinc finger protein DOF1.8 (DOF1.8) (Arabidopsis thaliana (Mouse-ear cress)).